Reading from the N-terminus, the 456-residue chain is Bifunctional protein GlmU (456 aa).

The pyrophosphorylase stretch occupies residues 1-229 (MLNNAMSVVI…LSEVEGVNNR (229 aa)). UDP-N-acetyl-alpha-D-glucosamine is bound by residues 11 to 14 (LAAG), K25, Q76, 81 to 82 (GT), 103 to 105 (YGD), G140, E154, N169, and N227. D105 is a binding site for Mg(2+). Residue N227 coordinates Mg(2+). The segment at 230 to 250 (LQLSRLERVYQSEQAEKLLLA) is linker. Residues 251–456 (GVMLRDPARF…EGWRRPVKKK (206 aa)) form an N-acetyltransferase region. Positions 333 and 351 each coordinate UDP-N-acetyl-alpha-D-glucosamine. Catalysis depends on H363, which acts as the Proton acceptor. The UDP-N-acetyl-alpha-D-glucosamine site is built by Y366 and N377. Residues A380, 386 to 387 (NY), S405, A423, and R440 contribute to the acetyl-CoA site.

In the N-terminal section; belongs to the N-acetylglucosamine-1-phosphate uridyltransferase family. The protein in the C-terminal section; belongs to the transferase hexapeptide repeat family. In terms of assembly, homotrimer. Mg(2+) is required as a cofactor.

The protein localises to the cytoplasm. The enzyme catalyses alpha-D-glucosamine 1-phosphate + acetyl-CoA = N-acetyl-alpha-D-glucosamine 1-phosphate + CoA + H(+). The catalysed reaction is N-acetyl-alpha-D-glucosamine 1-phosphate + UTP + H(+) = UDP-N-acetyl-alpha-D-glucosamine + diphosphate. It participates in nucleotide-sugar biosynthesis; UDP-N-acetyl-alpha-D-glucosamine biosynthesis; N-acetyl-alpha-D-glucosamine 1-phosphate from alpha-D-glucosamine 6-phosphate (route II): step 2/2. It functions in the pathway nucleotide-sugar biosynthesis; UDP-N-acetyl-alpha-D-glucosamine biosynthesis; UDP-N-acetyl-alpha-D-glucosamine from N-acetyl-alpha-D-glucosamine 1-phosphate: step 1/1. Its pathway is bacterial outer membrane biogenesis; LPS lipid A biosynthesis. Its function is as follows. Catalyzes the last two sequential reactions in the de novo biosynthetic pathway for UDP-N-acetylglucosamine (UDP-GlcNAc). The C-terminal domain catalyzes the transfer of acetyl group from acetyl coenzyme A to glucosamine-1-phosphate (GlcN-1-P) to produce N-acetylglucosamine-1-phosphate (GlcNAc-1-P), which is converted into UDP-GlcNAc by the transfer of uridine 5-monophosphate (from uridine 5-triphosphate), a reaction catalyzed by the N-terminal domain. The protein is Bifunctional protein GlmU of Shigella flexneri serotype 5b (strain 8401).